Here is a 1253-residue protein sequence, read N- to C-terminus: Myosin heavy chain 95F (1253 aa).

Residues 3 to 54 (EDTQLVWVRDAAEGYIQGRITEIGAKEFEVTPTDRKYPKRTCHFDDIHSSCD) enclose the Myosin N-terminal SH3-like domain. The Myosin motor domain maps to 57–766 (QDHDDNCELM…KFVEFDRIMR (710 aa)). 151 to 158 (GESGAGKT) contacts ATP. Positions 647–666 (GELMEKLEQNGTNFIRCIKP) are actin-binding. Residues 808–837 (RNKCVLIAQRIARGFLARKQHRPRYQGIGK) enclose the IQ domain. Positions 900 to 1022 (ANMNKLTVDL…LRLANESNGQ (123 aa)) form a coiled coil. The tract at residues 1187 to 1193 (PILLVAG) is hydrophobic region. The tract at residues 1233–1253 (AYKNLGAAKPNGPAAAMQKQQ) is disordered.

Belongs to the TRAFAC class myosin-kinesin ATPase superfamily. Myosin family. In terms of tissue distribution, isoform B is present at a higher level in the head and gonads than in the thoraxes. Isoform 145 kDa is found only in the head. CLIP-190 and jar are coexpressed at several times in development and in a number of tissues, including embryonic axonal neuron processes and posterior pole.

The protein resides in the cytoplasm. It localises to the cytoskeleton. Its function is as follows. Myosin is a protein that binds to actin and has ATPase activity that is activated by actin. Together CLIP-190 and jar may coordinate the interaction between the actin and microtubule cytoskeleton. May link endocytic vesicles to microtubules and may be involved in transport in the early embryo and in the dynamic process of dorsal closure. It is believed that its function changes during the life cycle. The polypeptide is Myosin heavy chain 95F (jar) (Drosophila melanogaster (Fruit fly)).